Here is a 163-residue protein sequence, read N- to C-terminus: Probable cyclic pyranopterin monophosphate synthase (163 aa).

The segment at 1-23 is disordered; the sequence is MPDGDDDALTHTTADGDAQMVDV. Residues 80–82 and 116–117 contribute to the substrate site; these read MCH and ME. The active site involves Asp-131.

It belongs to the MoaC family. Homohexamer; trimer of dimers.

The catalysed reaction is (8S)-3',8-cyclo-7,8-dihydroguanosine 5'-triphosphate = cyclic pyranopterin phosphate + diphosphate. It functions in the pathway cofactor biosynthesis; molybdopterin biosynthesis. Functionally, catalyzes the conversion of (8S)-3',8-cyclo-7,8-dihydroguanosine 5'-triphosphate to cyclic pyranopterin monophosphate (cPMP). The chain is Probable cyclic pyranopterin monophosphate synthase from Halobacterium salinarum (strain ATCC 29341 / DSM 671 / R1).